Consider the following 131-residue polypeptide: Peptide methionine sulfoxide reductase MsrB (131 aa).

The MsrB domain maps to 8 to 130 (LDEWRSMLDP…NSVCIDLRPR (123 aa)). Cys-47, Cys-50, Cys-96, and Cys-99 together coordinate Zn(2+). The active-site Nucleophile is the Cys-119.

It belongs to the MsrB Met sulfoxide reductase family. Requires Zn(2+) as cofactor.

The catalysed reaction is L-methionyl-[protein] + [thioredoxin]-disulfide + H2O = L-methionyl-(R)-S-oxide-[protein] + [thioredoxin]-dithiol. This chain is Peptide methionine sulfoxide reductase MsrB, found in Pseudomonas putida (strain ATCC 47054 / DSM 6125 / CFBP 8728 / NCIMB 11950 / KT2440).